A 172-amino-acid polypeptide reads, in one-letter code: MERAEKREFVTELNEVFKASGSVVVAHYAGATVAQMNDFRSKMRAAGGTVKVAKNRLAKIALQGTEAEGISNLFKGQTLIAYSNDPITAPKVVMDFAKTNDKIVVLGGAMGTTTLNAEGVKSLATLPSLDELRAKLLGMIQTPATRIAGVVAAPASQLARVFSAYAKKDEAA.

It belongs to the universal ribosomal protein uL10 family. In terms of assembly, part of the ribosomal stalk of the 50S ribosomal subunit. The N-terminus interacts with L11 and the large rRNA to form the base of the stalk. The C-terminus forms an elongated spine to which L12 dimers bind in a sequential fashion forming a multimeric L10(L12)X complex.

Forms part of the ribosomal stalk, playing a central role in the interaction of the ribosome with GTP-bound translation factors. The chain is Large ribosomal subunit protein uL10 from Rhizobium etli (strain ATCC 51251 / DSM 11541 / JCM 21823 / NBRC 15573 / CFN 42).